A 502-amino-acid chain; its full sequence is Lysine--tRNA ligase (502 aa).

Mg(2+) is bound by residues Glu-411 and Glu-418.

This sequence belongs to the class-II aminoacyl-tRNA synthetase family. Homodimer. Mg(2+) serves as cofactor.

It localises to the cytoplasm. The catalysed reaction is tRNA(Lys) + L-lysine + ATP = L-lysyl-tRNA(Lys) + AMP + diphosphate. In Clostridium tetani (strain Massachusetts / E88), this protein is Lysine--tRNA ligase.